A 157-amino-acid polypeptide reads, in one-letter code: Transcriptional repressor NrdR (157 aa).

A compositionally biased stretch (polar residues) spans 1 to 11; the sequence is MQCPSCQNTDS. The tract at residues 1 to 21 is disordered; the sequence is MQCPSCQNTDSRVLESRSADT. The segment at 3-34 is a zinc-finger region; sequence CPSCQNTDSRVLESRSADTGKSVRRRRECLNC. One can recognise an ATP-cone domain in the interval 49–139; the sequence is ITVIKRSESK…VYRQFNGIND (91 aa).

The protein belongs to the NrdR family. Zn(2+) is required as a cofactor.

Functionally, negatively regulates transcription of bacterial ribonucleotide reductase nrd genes and operons by binding to NrdR-boxes. This Prochlorococcus marinus (strain MIT 9211) protein is Transcriptional repressor NrdR.